Consider the following 220-residue polypeptide: Protein CREG1 (220 aa).

A signal peptide spans methionine 1 to glycine 31. 3 N-linked (GlcNAc...) asparagine glycosylation sites follow: asparagine 160, asparagine 193, and asparagine 216.

This sequence belongs to the CREG family. In terms of assembly, homodimer. Interacts with IGF2R; the interaction is dependent on glycosylation. In terms of processing, N-glycosylated.

The protein resides in the secreted. Its function is as follows. May contribute to the transcriptional control of cell growth and differentiation. Antagonizes transcriptional activation and cellular transformation by the adenovirus E1A protein. The transcriptional control activity of cell growth requires interaction with IGF2R. This is Protein CREG1 (CREG1) from Homo sapiens (Human).